Consider the following 150-residue polypeptide: Large ribosomal subunit protein bL9 (150 aa).

This sequence belongs to the bacterial ribosomal protein bL9 family.

Functionally, binds to the 23S rRNA. In Shewanella sediminis (strain HAW-EB3), this protein is Large ribosomal subunit protein bL9.